The primary structure comprises 96 residues: uncharacterized protein (96 aa).

This is an uncharacterized protein from Escherichia coli O157:H7.